We begin with the raw amino-acid sequence, 180 residues long: Protein GrpE (180 aa).

It belongs to the GrpE family. Homodimer.

The protein resides in the cytoplasm. In terms of biological role, participates actively in the response to hyperosmotic and heat shock by preventing the aggregation of stress-denatured proteins, in association with DnaK and GrpE. It is the nucleotide exchange factor for DnaK and may function as a thermosensor. Unfolded proteins bind initially to DnaJ; upon interaction with the DnaJ-bound protein, DnaK hydrolyzes its bound ATP, resulting in the formation of a stable complex. GrpE releases ADP from DnaK; ATP binding to DnaK triggers the release of the substrate protein, thus completing the reaction cycle. Several rounds of ATP-dependent interactions between DnaJ, DnaK and GrpE are required for fully efficient folding. This chain is Protein GrpE, found in Picrophilus torridus (strain ATCC 700027 / DSM 9790 / JCM 10055 / NBRC 100828 / KAW 2/3).